The chain runs to 250 residues: Tryptophan synthase alpha chain (250 aa).

Residues Glu-31 and Asp-42 each act as proton acceptor in the active site.

It belongs to the TrpA family. As to quaternary structure, tetramer of two alpha and two beta chains.

The catalysed reaction is (1S,2R)-1-C-(indol-3-yl)glycerol 3-phosphate + L-serine = D-glyceraldehyde 3-phosphate + L-tryptophan + H2O. Its pathway is amino-acid biosynthesis; L-tryptophan biosynthesis; L-tryptophan from chorismate: step 5/5. Functionally, the alpha subunit is responsible for the aldol cleavage of indoleglycerol phosphate to indole and glyceraldehyde 3-phosphate. The protein is Tryptophan synthase alpha chain of Staphylococcus carnosus (strain TM300).